Here is a 251-residue protein sequence, read N- to C-terminus: MVDQEKETTHFGFRTVAKEQKEGMVAEVFHSVAAKYDLMNDLMSFGVHRIWKRFTIDCSGVRRGQRVLDLAGGTGDLTAKFSRLVGEQGEVVLADINESMLRMGREKLRDKGIVGNVSYVQANAEALPFPDNYFDCITISFGLRNVTEKEKALRSMFRVLKPGGRLLVLEFSKPLLEPLSKAYDAYSFHILPKIGELVAQDSESYRYLAESIRMHPDQETLKSMMMDAGFENVTYSNLTGGIVALHRGFKF.

S-adenosyl-L-methionine contacts are provided by residues Thr-74, Asp-95, 123–124, and Ser-140; that span reads NA.

This sequence belongs to the class I-like SAM-binding methyltransferase superfamily. MenG/UbiE family.

It catalyses the reaction a 2-demethylmenaquinol + S-adenosyl-L-methionine = a menaquinol + S-adenosyl-L-homocysteine + H(+). It carries out the reaction a 2-methoxy-6-(all-trans-polyprenyl)benzene-1,4-diol + S-adenosyl-L-methionine = a 5-methoxy-2-methyl-3-(all-trans-polyprenyl)benzene-1,4-diol + S-adenosyl-L-homocysteine + H(+). It functions in the pathway quinol/quinone metabolism; menaquinone biosynthesis; menaquinol from 1,4-dihydroxy-2-naphthoate: step 2/2. It participates in cofactor biosynthesis; ubiquinone biosynthesis. Functionally, methyltransferase required for the conversion of demethylmenaquinol (DMKH2) to menaquinol (MKH2) and the conversion of 2-polyprenyl-6-methoxy-1,4-benzoquinol (DDMQH2) to 2-polyprenyl-3-methyl-6-methoxy-1,4-benzoquinol (DMQH2). The chain is Ubiquinone/menaquinone biosynthesis C-methyltransferase UbiE from Yersinia enterocolitica serotype O:8 / biotype 1B (strain NCTC 13174 / 8081).